We begin with the raw amino-acid sequence, 448 residues long: Putative vacuolar cation/proton exchanger 6 (448 aa).

The Cytoplasmic portion of the chain corresponds to 31 to 81 (MGLVNEVELKSLLEQETDSPQTNAASLMEQGSLRERRAKAPRNSVVQSFKI). The chain crosses the membrane as a helical span at residues 82 to 102 (VILSNKLNLLLPFGPLAILVH). At 103–109 (YLTDNKG) the chain is on the extracellular side. The chain crosses the membrane as a helical span at residues 110 to 130 (WFFLLSLVGITPLAERLGYAT). The Cytoplasmic segment spans residues 131–141 (EQLSCYTGATV). The chain crosses the membrane as a helical span at residues 142 to 162 (GGLLNATFGNVIELIISIIAL). The segment at 150–185 (GNVIELIISIIALKNGMIRVVQLTLLGSILSNILLV) is cation selection. The Extracellular portion of the chain corresponds to 163-178 (KNGMIRVVQLTLLGSI). Residues 179-199 (LSNILLVLGCAFFCGGLVFPG) traverse the membrane as a helical segment. Over 200-209 (KDQVFDKRNA) the chain is Cytoplasmic. Residues 210 to 230 (VVSSGMLLMAVMGLLFPTFLH) traverse the membrane as a helical segment. At 231 to 243 (YTHSEVHAGSSEL) the chain is on the extracellular side. Residues 244 to 264 (ALSRFISCIMLVAYAAYLFFQ) form a helical membrane-spanning segment. Residues 265–295 (LKSQPSFYTEKTNQNEETSNDDEDPEISKWE) are Cytoplasmic-facing. A helical membrane pass occupies residues 296–316 (AIIWLSIFTAWVSLLSGYLVD). At 317–334 (AIEGTSVSWKIPISFISV) the chain is on the extracellular side. A helical transmembrane segment spans residues 335–355 (ILLPIVGNAAEHAGAIMFAMK). The interval 341–376 (GNAAEHAGAIMFAMKDKLDLSLGVAIGSSIQISMFA) is cation selection. Topologically, residues 356–363 (DKLDLSLG) are cytoplasmic. The helical transmembrane segment at 364 to 384 (VAIGSSIQISMFAVPFCVVIG) threads the bilayer. Residues 385-393 (WMMGAQMDL) are Extracellular-facing. The chain crosses the membrane as a helical span at residues 394 to 414 (NLQLFETATLLITVIVVAFFL). Residues 415–425 (QLEGTSNYFKR) lie on the Cytoplasmic side of the membrane. Residues 426 to 446 (LMLILCYLIVAASFFVHEDPH) traverse the membrane as a helical segment. Topologically, residues 447 to 448 (QG) are extracellular.

Belongs to the Ca(2+):cation antiporter (CaCA) (TC 2.A.19) family. Cation/proton exchanger (CAX) subfamily.

Its subcellular location is the vacuole membrane. Vacuolar cation/proton exchanger (CAX). Translocates Ca(2+) and other metal ions into vacuoles using the proton gradient formed by H(+)-ATPase and H(+)-pyrophosphatase. This is Putative vacuolar cation/proton exchanger 6 (CAX6) from Arabidopsis thaliana (Mouse-ear cress).